Consider the following 96-residue polypeptide: MEQAPEDQGPQREPYNEWTLELLEELKSEAVRHFPRLWLHSLGQHIYETYGDTWAGVEAIIRILQQLLFIHFRIGCQHSRIGITRQRRARNGASRS.

The segment at 1–42 (MEQAPEDQGPQREPYNEWTLELLEELKSEAVRHFPRLWLHSL) is homooligomerization. A phosphoserine; by host mark is found at Ser79, Ser94, and Ser96.

The protein belongs to the HIV-1 VPR protein family. In terms of assembly, homooligomer, may form homodimer. Interacts with p6-gag region of the Pr55 Gag precursor protein through a (Leu-X-X)4 motif near the C-terminus of the P6gag protein. Interacts with host UNG. May interact with host RAD23A/HHR23A. Interacts with host VPRBP/DCAF1, leading to hijack the CUL4A-RBX1-DDB1-DCAF1/VPRBP complex, mediating ubiquitination of host proteins such as TERT and ZGPAT and arrest of the cell cycle in G2 phase. In terms of processing, phosphorylated on several residues by host. These phosphorylations regulate VPR activity for the nuclear import of the HIV-1 pre-integration complex.

It is found in the virion. The protein resides in the host nucleus. Its subcellular location is the host extracellular space. During virus replication, may deplete host UNG protein, and incude G2-M cell cycle arrest. Acts by targeting specific host proteins for degradation by the 26S proteasome, through association with the cellular CUL4A-DDB1 E3 ligase complex by direct interaction with host VPRPB/DCAF-1. Cell cycle arrest reportedly occurs within hours of infection and is not blocked by antiviral agents, suggesting that it is initiated by the VPR carried into the virion. Additionally, VPR induces apoptosis in a cell cycle dependent manner suggesting that these two effects are mechanistically linked. Detected in the serum and cerebrospinal fluid of AIDS patient, VPR may also induce cell death to bystander cells. Functionally, during virus entry, plays a role in the transport of the viral pre-integration (PIC) complex to the host nucleus. This function is crucial for viral infection of non-dividing macrophages. May act directly at the nuclear pore complex, by binding nucleoporins phenylalanine-glycine (FG)-repeat regions. The polypeptide is Protein Vpr (Human immunodeficiency virus type 1 group M subtype B (isolate RF/HAT3) (HIV-1)).